The following is an 80-amino-acid chain: Large ribosomal subunit protein bL31B (80 aa).

It belongs to the bacterial ribosomal protein bL31 family. Type B subfamily. As to quaternary structure, part of the 50S ribosomal subunit.

This chain is Large ribosomal subunit protein bL31B, found in Stenotrophomonas maltophilia (strain K279a).